Reading from the N-terminus, the 467-residue chain is 3-isopropylmalate dehydratase large subunit (467 aa).

Positions 347, 407, and 410 each coordinate [4Fe-4S] cluster.

This sequence belongs to the aconitase/IPM isomerase family. LeuC type 1 subfamily. As to quaternary structure, heterodimer of LeuC and LeuD. The cofactor is [4Fe-4S] cluster.

The enzyme catalyses (2R,3S)-3-isopropylmalate = (2S)-2-isopropylmalate. Its pathway is amino-acid biosynthesis; L-leucine biosynthesis; L-leucine from 3-methyl-2-oxobutanoate: step 2/4. Functionally, catalyzes the isomerization between 2-isopropylmalate and 3-isopropylmalate, via the formation of 2-isopropylmaleate. This is 3-isopropylmalate dehydratase large subunit from Synechococcus sp. (strain JA-2-3B'a(2-13)) (Cyanobacteria bacterium Yellowstone B-Prime).